A 228-amino-acid chain; its full sequence is Peroxiredoxin-like 2C (228 aa).

Residues 1 to 22 (MAAPSEAPVTRQVSGHAAPAPV) form a disordered region. Low complexity predominate over residues 13 to 22 (VSGHAAPAPV).

It belongs to the peroxiredoxin-like PRXL2 family. PRXL2C subfamily.

May positively regulate ERK1/2 signaling and AKT1 activation leading to HIF1A up-regulation with an increased expression of glycolysis genes and enhanced glycolysis. The chain is Peroxiredoxin-like 2C (PRXL2C) from Bos taurus (Bovine).